The primary structure comprises 236 residues: 2-C-methyl-D-erythritol 4-phosphate cytidylyltransferase (236 aa).

This sequence belongs to the IspD/TarI cytidylyltransferase family. IspD subfamily. In terms of assembly, homodimer.

It carries out the reaction 2-C-methyl-D-erythritol 4-phosphate + CTP + H(+) = 4-CDP-2-C-methyl-D-erythritol + diphosphate. It functions in the pathway isoprenoid biosynthesis; isopentenyl diphosphate biosynthesis via DXP pathway; isopentenyl diphosphate from 1-deoxy-D-xylulose 5-phosphate: step 2/6. Its function is as follows. Catalyzes the formation of 4-diphosphocytidyl-2-C-methyl-D-erythritol from CTP and 2-C-methyl-D-erythritol 4-phosphate (MEP). The protein is 2-C-methyl-D-erythritol 4-phosphate cytidylyltransferase of Salmonella arizonae (strain ATCC BAA-731 / CDC346-86 / RSK2980).